Consider the following 1164-residue polypeptide: DNA-directed RNA polymerase 132 kDa polypeptide (1164 aa).

Belongs to the RNA polymerase beta chain family. The DNA-dependent RNA polymerase used for intermediate and late genes expression consists of eight subunits (147) kDa, (133) kDa, (35) kDa, (30) kDa, (22) kDa, (19) kDa, (18) kDa and (7) kDa totalling more than 500 kDa in mass. The same holoenzyme, with the addition of the transcription-specificity factor RAP94, is used for early gene expression.

The protein localises to the virion. It carries out the reaction RNA(n) + a ribonucleoside 5'-triphosphate = RNA(n+1) + diphosphate. Part of the DNA-dependent RNA polymerase which catalyzes the transcription of viral DNA into RNA using the four ribonucleoside triphosphates as substrates. Responsible for the transcription of early, intermediate and late genes. DNA-dependent RNA polymerase associates with the early transcription factor (ETF), itself composed of D6 and A7, thereby allowing the early genes transcription. Late transcription, and probably also intermediate transcription, require newly synthesized RNA polymerase. The protein is DNA-directed RNA polymerase 132 kDa polypeptide (RPO132) of Cowpox virus (strain GRI-90 / Grishak) (CPV).